A 425-amino-acid polypeptide reads, in one-letter code: Inhibin beta A chain (425 aa).

A signal peptide spans 1-20; the sequence is MPLLWLRGFLLASCWIIVRS. Residues 21 to 309 constitute a propeptide that is removed on maturation; the sequence is SPTPGSEGHS…EDHPHRRRRR (289 aa). N165 carries an N-linked (GlcNAc...) asparagine glycan. A disordered region spans residues 259–289; it reads KKKKKEEEGEGKKRDGEGGAGGDEEKEQSHR. The segment covering 263–275 has biased composition (basic and acidic residues); sequence KEEEGEGKKRDGE. Disulfide bonds link C313-C321, C320-C390, C349-C422, and C353-C424.

It belongs to the TGF-beta family. In terms of assembly, dimeric, linked by one or more disulfide bonds. Inhibin A is a dimer of alpha/INHA and beta-A/INHBA. Activin A is a homodimer of beta-A/INHBA. Activin AB is a dimer of beta-A/INHBA and beta-B/INHBB. Interacts with FST and FSTL3; these interactions prevent activin A interaction to its type II receptor. Activin A interacts with ACVR2A. Activin A interacts with BMPR2. Inhibin A interacts with ACVR1; this interaction creates a non-signaling complex (NSC) that inhibits ACVR1-mediated BMP signaling. Inhibin A interacts with ACVR2A.

It localises to the secreted. Inhibins/activins are involved in regulating a number of diverse functions such as hypothalamic and pituitary hormone secretion, gonadal hormone secretion, germ cell development and maturation, erythroid differentiation, insulin secretion, nerve cell survival, embryonic axial development or bone growth, depending on their subunit composition. Its function is as follows. Activin A is a homodimer of INHBA that plays a role in several essential biological processes including embryonic development, stem cell maintenance and differentiation, haematopoiesis, cell proliferation and tissue fibrosis. Signals through type I (such as ACVR1B or ACVR1C) and type II receptors (such as ACVR2A, ACVR2B or BMPR2) which, upon ligand binding, phosphorylate SMAD2 and SMAD3 intracellular signaling mediators that form a complex with SMAD4, translocate to the nucleus and modulate gene expression. Can also activate alternative non-canonical intracellular signaling pathways including the p38 MAPK, extracellular signal-regulated kinases 1/2 (ERK1/2) and c-Jun N-terminal kinases (JNKs) to modulate cell migration and differentiation. Alternatively, promotes osteoblastic differentiation via ACVRL1-SMAD1/5/9 pathway. In addition, can engage the type I receptor ACVR1 to form an ACVR1-activin A-type II receptor non-signaling complex (NSC) that renders receptors unavailable for engagement with BMPs, hence resulting in an apparent inhibition of ACVR1-mediated BMP signaling. Functionally, inhibin A is a dimer of alpha/INHA and beta-A/INHBA that functions as a feedback regulator in the hypothalamic-pituitary-gonadal (HPG) axis. Inhibits the secretion of FSH from the anterior pituitary gland by acting on pituitary gonadotrope cells. Antagonizes activin A by binding to the proteoglycan, betaglycan, and forming a stable complex with and, thereby, sequestering type II activin receptors while excluding type I receptor. This chain is Inhibin beta A chain (INHBA), found in Bos taurus (Bovine).